Consider the following 85-residue polypeptide: Toxin BmKAEP (85 aa).

A signal peptide spans 1–21; that stretch reads MKLFLLLVISASMLIDGLVNA. Residues 22–82 enclose the LCN-type CS-alpha/beta domain; that stretch reads DGYIRGSNGC…TWKSESNTCG (61 aa). 4 cysteine pairs are disulfide-bonded: Cys31–Cys81, Cys35–Cys56, Cys42–Cys63, and Cys46–Cys65. Gly82 is modified (glycine amide).

Expressed by the venom gland.

It is found in the secreted. In terms of biological role, shows anti-epileptic activity. Shares high homology with depressant insect toxins, but shows very weak toxicity against mammals and insects and no obvious symptoms on insect larvae. May target voltage-gated sodium channel (Nav). The sequence is that of Toxin BmKAEP from Olivierus martensii (Manchurian scorpion).